A 626-amino-acid polypeptide reads, in one-letter code: MNKILLKRQILYNLPKYFKNNIPYTITINKSNQFINNNCKNNNNNFRKLNFTTTTTTTTTAPITNNKPKSNMLYSPKDRSYEEAVNALLTLQSNQTVIISWTKERRDNKEESAKFLMEEMRNYCKTLSIDLERESIIHVAGTKGKGSTCAITESIIREQGFSTGLFTSPHLISPRERIRINGEMISKEMFSQYFWNCWDLLIKDYQTQLPNFFRYLTLMALKIFQDEAIQCTILEVGIGGRMDSTNVFPKPMVTGISALGYDHQNLLGNTLAEIALEKAGIMKVGIPIFTVSSQLPEAINVLIDHSNKVKSPLSIVPSIDQYTISSGGGNNNNNKIESIGLKGTHQLENASLAIALANCWFKKQTFKDVNEIFNSENHKQYNYETNNYNVTQFTPLLKSIELGLKNCEWAGRAQHFTNPSHFPNMDFYLDGAHTVESSIVMLNWWKSIVNTTTTTTTTTTTTTTNNNDDDTIHILIFNSTGGRNPTSFLTPIIQSIDNKEIPIFNKSIIPNIIIEKPIDKKYYINEIIQSNQSSTATTTPIPDNAAVKQTTEIKESSTWEDFVVECYDKLSKKSHPCITADSIESSIEIAKELSENGTKNVKVLITGSLYLVGGVLKVLLKEKSFN.

Position 144–147 (144–147) interacts with ATP; that stretch reads GKGS. Residues Ser168, Glu235, and His263 each contribute to the Mg(2+) site. ATP contacts are provided by Arg412 and Asp430.

It belongs to the folylpolyglutamate synthase family.

It carries out the reaction (6S)-5,6,7,8-tetrahydrofolyl-(gamma-L-Glu)(n) + L-glutamate + ATP = (6S)-5,6,7,8-tetrahydrofolyl-(gamma-L-Glu)(n+1) + ADP + phosphate + H(+). The protein operates within cofactor biosynthesis; tetrahydrofolylpolyglutamate biosynthesis. Its function is as follows. Conversion of folates to polyglutamate derivatives. This chain is Putative folylpolyglutamate synthase (folC), found in Dictyostelium discoideum (Social amoeba).